Here is a 266-residue protein sequence, read N- to C-terminus: Glucosamine-6-phosphate deaminase (266 aa).

D72 (proton acceptor; for enolization step) is an active-site residue. The For ring-opening step role is filled by D141. H143 acts as the Proton acceptor; for ring-opening step in catalysis. E148 (for ring-opening step) is an active-site residue.

This sequence belongs to the glucosamine/galactosamine-6-phosphate isomerase family. NagB subfamily. Homohexamer; trimer of disulfide-linked dimers.

The enzyme catalyses alpha-D-glucosamine 6-phosphate + H2O = beta-D-fructose 6-phosphate + NH4(+). Its pathway is amino-sugar metabolism; N-acetylneuraminate degradation; D-fructose 6-phosphate from N-acetylneuraminate: step 5/5. Its activity is regulated as follows. Allosterically activated by N-acetylglucosamine 6-phosphate (GlcNAc6P). Catalyzes the reversible isomerization-deamination of glucosamine 6-phosphate (GlcN6P) to form fructose 6-phosphate (Fru6P) and ammonium ion. This Shigella dysenteriae serotype 1 (strain Sd197) protein is Glucosamine-6-phosphate deaminase.